Consider the following 242-residue polypeptide: Ribosomal RNA small subunit methyltransferase G (242 aa).

S-adenosyl-L-methionine-binding positions include glycine 78, phenylalanine 83, 129–130, and arginine 148; that span reads AE. A disordered region spans residues 221–242; sequence TKKRYPRKAGVPEKSPIGGKHD.

It belongs to the methyltransferase superfamily. RNA methyltransferase RsmG family.

It is found in the cytoplasm. Specifically methylates the N7 position of a guanine in 16S rRNA. The protein is Ribosomal RNA small subunit methyltransferase G of Oenococcus oeni (strain ATCC BAA-331 / PSU-1).